A 523-amino-acid chain; its full sequence is Sugar carrier protein C (523 aa).

At 1–25 (MPAVGGIPPSGGNRKVYPGNLTLYV) the chain is on the cytoplasmic side. Transmembrane regions (helical) follow at residues 26–46 (TVTC…IGIS), 86–106 (MFTS…STIT), 120–140 (VLFC…MLIL), 143–163 (ILLG…LSEM), 172–192 (LNIG…VLNY), 205–225 (LSLG…LVLP), 298–320 (LTGI…FGSD), 327–347 (VITG…VDKW), 351–371 (FLFL…AACI), 387–407 (WYAV…AWSW), 433–453 (SVNM…LCHL), and 456–476 (GLFI…YYFL). Topologically, residues 477-523 (PETKGIPIEEMGQVWKQHWYWSRYVVDEDYPNGGLEMGKEGRIPKNV) are cytoplasmic.

The protein belongs to the major facilitator superfamily. Sugar transporter (TC 2.A.1.1) family.

It is found in the membrane. The protein is Sugar carrier protein C (STC) of Ricinus communis (Castor bean).